The following is a 2254-amino-acid chain: Voltage-dependent T-type calcium channel subunit alpha-1G (2254 aa).

Positions 1–48 are disordered; that stretch reads MDEEEDGAGAEESGQPRSFTQLNDLSGAGGRQGPGSTEKDPGSADSEA. The Cytoplasmic segment spans residues 1-80; it reads MDEEEDGAGA…RSWCLRTVCN (80 aa). Residues 15-24 are compositionally biased toward polar residues; the sequence is QPRSFTQLND. The I repeat unit spans residues 68 to 398; sequence SRPRSWCLRT…LCLVVIATQF (331 aa). The helical transmembrane segment at 81–101 threads the bilayer; it reads PWFERVSMLVILLNCVTLGMF. Residues 102-119 lie on the Extracellular side of the membrane; sequence RPCEDIACDSQRCRILQA. Residues 120–141 form a helical membrane-spanning segment; that stretch reads FDDFIFAFFAVEMVVKMVALGI. Residues 142 to 150 lie on the Cytoplasmic side of the membrane; it reads FGKKCYLGD. A helical transmembrane segment spans residues 151–170; the sequence is TWNRLDFFIVIAGMLEYSLD. The Extracellular portion of the chain corresponds to 171–175; it reads LQNVS. N-linked (GlcNAc...) asparagine glycosylation occurs at Asn-173. A helical membrane pass occupies residues 176–193; the sequence is FSAVRTVRVLRPLRAINR. The Cytoplasmic portion of the chain corresponds to 194–213; sequence VPSMRILVTLLLDTLPMLGN. The chain crosses the membrane as a helical span at residues 214–234; the sequence is VLLLCFFVFFIFGIVGVQLWA. The Extracellular segment spans residues 235-370; sequence GLLRNRCFLP…YFVMDAHSFY (136 aa). Asn-246, Asn-306, Asn-310, and Asn-322 each carry an N-linked (GlcNAc...) asparagine glycan. Residues 371 to 395 traverse the membrane as a helical segment; it reads NFIYFILLIIVGSFFMINLCLVVIA. Residues 396-744 lie on the Cytoplasmic side of the membrane; sequence TQFSETKQRE…DTFRKIVDSK (349 aa). Ser-467 is subject to Phosphoserine. Residues 494-506 are compositionally biased toward basic residues; that stretch reads LVHHHHHHHHHYH. Disordered stretches follow at residues 494–513, 525–553, 579–598, and 699–721; these read LVHH…GTLR, DANG…AESV, ASGR…TSPP, and DAQH…GPDA. The segment covering 534-545 has biased composition (pro residues); that stretch reads LPPPSTPTPSGG. Ser-716 is modified (phosphoserine). The stretch at 730 to 968 is one II repeat; the sequence is WRLICDTFRK…LLVAILVEGF (239 aa). A helical membrane pass occupies residues 745–765; that stretch reads YFGRGIMIAILVNTLSMGIEY. Residues 766-778 lie on the Extracellular side of the membrane; it reads HEQPEELTNALEI. Residues 779-800 traverse the membrane as a helical segment; sequence SNIVFTSLFALEMLLKLLVYGP. Topologically, residues 801–806 are cytoplasmic; it reads FGYIKN. The chain crosses the membrane as a helical span at residues 807 to 825; it reads PYNIFDGVIVVISVWEIVG. At 826–833 the chain is on the extracellular side; the sequence is QQGGGLSV. A helical membrane pass occupies residues 834-857; sequence LRTFRLMRVLKLVRFLPALQRQLV. Residues 858 to 868 lie on the Cytoplasmic side of the membrane; it reads VLMKTMDNVAT. Residues 869-889 form a helical membrane-spanning segment; that stretch reads FCMLLMLFIFIFSILGMHLFG. Residues 890 to 940 lie on the Extracellular side of the membrane; the sequence is CKFASERDGDTLPDRKNFDSLLWAIVTVFQILTQEDWNKVLYNGMASTSSW. The helical transmembrane segment at 941-965 threads the bilayer; that stretch reads AALYFIALMTFGNYVLFNLLVAILV. At 966-1251 the chain is on the cytoplasmic side; that stretch reads EGFQAEGDAT…SRFRLLCHRI (286 aa). Positions 1024 to 1209 are disordered; that stretch reads TPMSHPKSSS…GDDDNDEGNL (186 aa). 2 stretches are compositionally biased toward low complexity: residues 1041-1052 and 1065-1091; these read GSGSRRTSSSGS and PPSA…SRNS. Acidic residues-rich tracts occupy residues 1117–1126 and 1196–1206; these read ESQDEEESSE and PQLDGDDDNDE. A phosphoserine mark is found at Ser-1118, Ser-1124, and Ser-1125. The III repeat unit spans residues 1242 to 1519; that stretch reads SRFRLLCHRI…MFVGVVVENF (278 aa). Residues 1252–1274 form a helical membrane-spanning segment; the sequence is ITHKMFDHVVLVIIFLNCITIAM. Residues 1275-1292 lie on the Extracellular side of the membrane; that stretch reads ERPKIDPHSAERIFLTLS. A helical transmembrane segment spans residues 1293–1313; that stretch reads NYIFTAVFLAEMTVKVVALGW. The Cytoplasmic segment spans residues 1314-1323; sequence CFGEQAYLRS. A helical transmembrane segment spans residues 1324–1343; that stretch reads SWNVLDGLLVLISVIDILVS. The Extracellular segment spans residues 1344 to 1357; sequence MVSDSGTKILGMLR. Residues 1358-1379 traverse the membrane as a helical segment; that stretch reads VLRLLRTLRPLRVISRAQGLKL. At 1380–1389 the chain is on the cytoplasmic side; sequence VVETLMSSLK. A helical membrane pass occupies residues 1390-1413; it reads PIGNIVVICCAFFIIFGILGVQLF. Topologically, residues 1414 to 1490 are extracellular; that stretch reads KGKFFVCQGE…DQQPIMNHNP (77 aa). Residues Asn-1427 and Asn-1430 are each glycosylated (N-linked (GlcNAc...) asparagine). A helical membrane pass occupies residues 1491–1516; that stretch reads WMLLYFISFLLIVAFFVLNMFVGVVV. The Cytoplasmic portion of the chain corresponds to 1517-1578; it reads ENFHKCRQHQ…RLLVHHLCTS (62 aa). The IV repeat unit spans residues 1564–1822; the sequence is DYSRFRLLVH…VVIAVLMKHL (259 aa). Residues 1579-1599 form a helical membrane-spanning segment; sequence HYLDLFITGVIGLNVVTMAME. Over 1600–1613 the chain is Extracellular; that stretch reads HYQQPQILDEALKI. Residues 1614 to 1635 traverse the membrane as a helical segment; that stretch reads CNYIFTVIFVFESVFKLVAFGF. The Cytoplasmic segment spans residues 1636 to 1642; the sequence is RRFFQDR. Residues 1643-1661 form a helical membrane-spanning segment; it reads WNQLDLAIVLLSIMGITLE. The Extracellular segment spans residues 1662–1675; the sequence is EIEVNLSLPINPTI. Residue Asn-1666 is glycosylated (N-linked (GlcNAc...) asparagine). The chain crosses the membrane as a helical span at residues 1676-1699; the sequence is IRIMRVLRIARVLKLLKMAVGMRA. The Cytoplasmic portion of the chain corresponds to 1700-1713; sequence LLHTVMQALPQVGN. The helical transmembrane segment at 1714 to 1734 threads the bilayer; that stretch reads LGLLFMLLFFIFAALGVELFG. At 1735–1794 the chain is on the extracellular side; it reads DLECDETHPCEGLGRHATFRNFGMAFLTLFRVSTGDNWNGIMKDTLRDCDQESTCYNTVI. The helical transmembrane segment at 1795 to 1822 threads the bilayer; the sequence is SPIYFVSFVLTAQFVLVNVVIAVLMKHL. Residues 1823 to 2254 lie on the Cytoplasmic side of the membrane; that stretch reads EESNKEAKEE…LSSDPTDMDP (432 aa). The disordered stretch occupies residues 2153-2254; the sequence is DSGSQPRLCP…LSSDPTDMDP (102 aa). Low complexity predominate over residues 2184-2193; the sequence is SPPSISIDPP. Polar residues-rich tracts occupy residues 2220-2232 and 2240-2254; these read PSVS…TAAS and LSLS…DMDP.

This sequence belongs to the calcium channel alpha-1 subunit (TC 1.A.1.11) family. CACNA1G subfamily. Post-translationally, in response to raising of intracellular calcium, the T-type channels are activated by CaM-kinase II. In terms of tissue distribution, highly expressed in brain. Moderate expression in heart; low expression in placenta, kidney and lung.

The protein localises to the cell membrane. It is found in the cytoplasm. It catalyses the reaction Ca(2+)(in) = Ca(2+)(out). Its function is as follows. Voltage-sensitive calcium channels (VSCC) mediate the entry of calcium ions into excitable cells and are also involved in a variety of calcium-dependent processes, including muscle contraction, hormone or neurotransmitter release, gene expression, cell motility, cell division and cell death. The isoform alpha-1G gives rise to T-type calcium currents. T-type calcium channels belong to the 'low-voltage activated (LVA)' group and are strongly blocked by nickel and mibefradil. A particularity of this type of channels is an opening at quite negative potentials and a voltage-dependent inactivation. T-type channels serve pacemaking functions in both central neurons and cardiac nodal cells and support calcium signaling in secretory cells and vascular smooth muscle. They may also be involved in the modulation of firing patterns of neurons which is important for information processing as well as in cell growth processes. The protein is Voltage-dependent T-type calcium channel subunit alpha-1G (Cacna1g) of Rattus norvegicus (Rat).